The following is a 555-amino-acid chain: CTP synthase (555 aa).

Positions methionine 1–isoleucine 271 are amidoligase domain. Serine 19 lines the CTP pocket. Serine 19 is a binding site for UTP. ATP is bound by residues serine 20 to leucine 25 and aspartate 77. Mg(2+) contacts are provided by aspartate 77 and glutamate 145. CTP-binding positions include aspartate 152–glutamate 154, lysine 192–glutamine 197, and lysine 228. Residues lysine 192–glutamine 197 and lysine 228 contribute to the UTP site. The region spanning arginine 297–alanine 537 is the Glutamine amidotransferase type-1 domain. Glycine 358 provides a ligand contact to L-glutamine. The Nucleophile; for glutamine hydrolysis role is filled by cysteine 385. L-glutamine-binding positions include leucine 386–glutamine 389, glutamate 409, and arginine 466. Catalysis depends on residues histidine 510 and glutamate 512. Residues aspartate 536–glycine 555 are disordered.

The protein belongs to the CTP synthase family. In terms of assembly, homotetramer.

The enzyme catalyses UTP + L-glutamine + ATP + H2O = CTP + L-glutamate + ADP + phosphate + 2 H(+). It catalyses the reaction L-glutamine + H2O = L-glutamate + NH4(+). It carries out the reaction UTP + NH4(+) + ATP = CTP + ADP + phosphate + 2 H(+). Its pathway is pyrimidine metabolism; CTP biosynthesis via de novo pathway; CTP from UDP: step 2/2. With respect to regulation, allosterically activated by GTP, when glutamine is the substrate; GTP has no effect on the reaction when ammonia is the substrate. The allosteric effector GTP functions by stabilizing the protein conformation that binds the tetrahedral intermediate(s) formed during glutamine hydrolysis. Inhibited by the product CTP, via allosteric rather than competitive inhibition. Its function is as follows. Catalyzes the ATP-dependent amination of UTP to CTP with either L-glutamine or ammonia as the source of nitrogen. Regulates intracellular CTP levels through interactions with the four ribonucleotide triphosphates. In Anaeromyxobacter dehalogenans (strain 2CP-C), this protein is CTP synthase.